The primary structure comprises 346 residues: Sensor protein kinase GraS (346 aa).

2 helical membrane passes run 18–38 (IFWI…DYDF) and 43–63 (LFYI…LTFF). Residues 126–332 (EFVHDIKTPV…TVKLIFPLQN (207 aa)) form the Histidine kinase domain.

In terms of assembly, interacts with GraX.

Its subcellular location is the cell membrane. The catalysed reaction is ATP + protein L-histidine = ADP + protein N-phospho-L-histidine.. Its function is as follows. Member of the two-component regulatory system GraR/GraS involved in resistance against cationic antimicrobial peptides (CAMPs). Functions as a sensor protein kinase which phosphorylates GraR through the auxiliary protein GraX. In turn, GraR up-regulates many genes such as adhesins, exoproteins, transporters, toxins, and proteins involved in cell wall synthesis. Down-regulates the expression of many genes involved in RNA and amino acid synthesis or glycolysis. This is Sensor protein kinase GraS (graS) from Staphylococcus aureus (strain MRSA252).